The following is a 308-amino-acid chain: MSNATKFGKVAVLLGGKSAERAVSLDSGQAVLDALLRSGVQAEAFDPQDRSVTELVNYDRAFIVLHGRGGEDGQIQGVLEWLNIPYTGTGVQGSAIGMDKVKTKQIWQGSDLPTAPYRIITKETDLDSVIAELGLPVIIKPVHEGSSVGMSKVEKAEDFAAAIEKATQHDAVVMAEKWITGREFTISFLNGQPLPVIRLQPPADVAFYDYEAKYQRNDVEYGIPCGLSETEEKKLQALCLRAFQAVGAEGWGRIDAMQDEQGNFWLLEVNTVPGMTSHSLVPKATKAVGYSFDELCVAILEQTLEGTA.

The ATP-grasp domain occupies 104–301; the sequence is KQIWQGSDLP…FDELCVAILE (198 aa). Position 130 to 185 (130 to 185) interacts with ATP; sequence IAELGLPVIIKPVHEGSSVGMSKVEKAEDFAAAIEKATQHDAVVMAEKWITGREFT. Mg(2+)-binding residues include Asp-255, Glu-268, and Asn-270.

Belongs to the D-alanine--D-alanine ligase family. Requires Mg(2+) as cofactor. Mn(2+) serves as cofactor.

It localises to the cytoplasm. It catalyses the reaction 2 D-alanine + ATP = D-alanyl-D-alanine + ADP + phosphate + H(+). Its pathway is cell wall biogenesis; peptidoglycan biosynthesis. Functionally, cell wall formation. This chain is D-alanine--D-alanine ligase, found in Acinetobacter baumannii (strain SDF).